Consider the following 365-residue polypeptide: MSGNTLGTIFAVTNFGESHGPAIGCVIDGCPPGMELAEADIQAELDRRRPGTSRHVTQRNEPDAVEILSGVYEGRTTGTPIALLIRNTDQRSKDYSNIAQSFRPGHADYTYWHKYGVRDPRGGGRSSARLTAPTVAAGAVARKWLQAKYGVELRACMTQLGELEIPFESWDHVPHNPFFAPVADVARYEEYMDALRKAGDSCGARLRVQARNVPVGLGEPLYDKLDADIAHAMMGLNAVKGVEIGAGFASVAQRGTTHGDSLTPKGFASNNAGGVLGGISTGQDIEVSLAIKPTSSIISPRESIDVHGQSTEVVTKGRHDPCVGIRAAPIAEALLAIVLMDHALRHRAQCGDVVQAVAPIQASFL.

The NADP(+) site is built by Arg-48 and Arg-54. FMN contacts are provided by residues 125–127 (RSS), 237–238 (NA), Gly-277, 292–296 (KPTSS), and Arg-318.

It belongs to the chorismate synthase family. As to quaternary structure, homotetramer. It depends on FMNH2 as a cofactor.

The catalysed reaction is 5-O-(1-carboxyvinyl)-3-phosphoshikimate = chorismate + phosphate. The protein operates within metabolic intermediate biosynthesis; chorismate biosynthesis; chorismate from D-erythrose 4-phosphate and phosphoenolpyruvate: step 7/7. Functionally, catalyzes the anti-1,4-elimination of the C-3 phosphate and the C-6 proR hydrogen from 5-enolpyruvylshikimate-3-phosphate (EPSP) to yield chorismate, which is the branch point compound that serves as the starting substrate for the three terminal pathways of aromatic amino acid biosynthesis. This reaction introduces a second double bond into the aromatic ring system. The sequence is that of Chorismate synthase from Paracidovorax citrulli (strain AAC00-1) (Acidovorax citrulli).